A 184-amino-acid polypeptide reads, in one-letter code: UPF0397 protein SAR2767 (184 aa).

5 consecutive transmembrane segments (helical) span residues 11-31 (VVAIGIGAAVFVILGRFVVIP), 44-64 (AFLALISAIFGPFAGLMTGLI), 77-97 (AWWSWVICSGIIGCLYGWIGL), 117-137 (GQIIANIICWALIAPTLDILI), and 148-168 (QGVISAVLNIISVGIIGTILL).

The protein belongs to the UPF0397 family.

It localises to the cell membrane. The sequence is that of UPF0397 protein SAR2767 from Staphylococcus aureus (strain MRSA252).